Consider the following 826-residue polypeptide: Protein lozenge (826 aa).

Disordered regions lie at residues 1 to 45 (MHLH…ASQT), 87 to 171 (PVSV…WSSS), and 214 to 263 (ASVG…NNNN). The segment covering 12–24 (PPSPSPNPTPTPS) has biased composition (pro residues). Residues 106-141 (SHHHHHLHHHYSPYHHAHPYHPPHPHAPHHHHHHHP) show a composition bias toward basic residues. The segment covering 142–153 (PYPYPPAGPHPP) has biased composition (pro residues). Over residues 156–171 (VTSSSTSPTGNGWSSS) the composition is skewed to polar residues. Residues 275-403 (LVQKRQQEHP…TVDGPREPRS (129 aa)) enclose the Runt domain. The segment covering 774–798 (QQQQQQQQQQQQVHHPQQQQVESAG) has biased composition (low complexity). Residues 774 to 826 (QQQQQQQQQQQQVHHPQQQQVESAGEVGGSGAGGVESAREEDVGDLSQVWRPY) are disordered.

As to expression, expressed in the pupal eye during programmed cell death.

The protein localises to the nucleus. Involved in prepatterning photoreceptor precursors in the developing eye; in the larval eye disk it defines a subset of cells as an equipotential group that is competent to respond to the sevenless developmental signal and another subset that confer proper photoreceptor identity by positively regulating the homeo box gene Bar. Involved in the aop/pnt dynamic in a Ras-dependent manner to regulate pros expression. Promotes apoptosis in the pupal eye by directly activating aos and klu. Also modulates hid- and rpr-mediated cell death. Regulates amos function in olfactory sensilla development. The chain is Protein lozenge (lz) from Drosophila melanogaster (Fruit fly).